Reading from the N-terminus, the 228-residue chain is UPF0173 metal-dependent hydrolase BcerKBAB4_4442 (228 aa).

It belongs to the UPF0173 family.

This chain is UPF0173 metal-dependent hydrolase BcerKBAB4_4442, found in Bacillus mycoides (strain KBAB4) (Bacillus weihenstephanensis).